The chain runs to 223 residues: Cytidylate kinase (223 aa).

12–20 (GPAGSGKST) contacts ATP.

This sequence belongs to the cytidylate kinase family. Type 1 subfamily.

The protein localises to the cytoplasm. The enzyme catalyses CMP + ATP = CDP + ADP. It catalyses the reaction dCMP + ATP = dCDP + ADP. The chain is Cytidylate kinase from Aster yellows witches'-broom phytoplasma (strain AYWB).